We begin with the raw amino-acid sequence, 64 residues long: Large ribosomal subunit protein bL28 (64 aa).

The protein belongs to the bacterial ribosomal protein bL28 family.

In Campylobacter jejuni subsp. jejuni serotype O:6 (strain 81116 / NCTC 11828), this protein is Large ribosomal subunit protein bL28.